Reading from the N-terminus, the 372-residue chain is Alanine dehydrogenase 1 (372 aa).

His94 is a catalytic residue. Position 170–200 (170–200 (TYVIFGGGVAATNAANVALGLNAKVIIIELN)) interacts with NAD(+).

Belongs to the AlaDH/PNT family.

The catalysed reaction is L-alanine + NAD(+) + H2O = pyruvate + NH4(+) + NADH + H(+). It participates in amino-acid degradation; L-alanine degradation via dehydrogenase pathway; NH(3) and pyruvate from L-alanine: step 1/1. May play a role in cell wall synthesis as L-alanine is an important constituent of the peptidoglycan layer. The polypeptide is Alanine dehydrogenase 1 (ald1) (Staphylococcus aureus (strain bovine RF122 / ET3-1)).